The chain runs to 523 residues: Transmembrane protein 266 (523 aa).

Residues 1–94 (MTNPQPAIEG…VFLLSASLNS (94 aa)) lie on the Cytoplasmic side of the membrane. Residues 95–115 (FLVACVILVVILLTLELLIDI) traverse the membrane as a helical segment. Residues 116 to 121 (KLLQFS) lie on the Extracellular side of the membrane. Residues 122-142 (SAFQFAGVIHWISLVILSVFF) form a helical membrane-spanning segment. Residues 143-161 (SETVLRIVVLGIWDYIENK) lie on the Cytoplasmic side of the membrane. The chain crosses the membrane as a helical span at residues 162 to 182 (IEVFDGAVIILSLAPMVASTV). Topologically, residues 183-191 (ANGPRSPWD) are extracellular. A helical transmembrane segment spans residues 192–212 (AISLIIMLRIWRVKRVIDAYV). The Cytoplasmic portion of the chain corresponds to 213 to 523 (LPVKLEMEMV…EQKLHRVPEA (311 aa)). Residues 218–270 (EMEMVIQQYEKAKVIQDEQLERLTQICQEQGFEIRQLRAHLAQQDLDLAAERE) are a coiled coil. The disordered stretch occupies residues 380–477 (SASRSSVTRA…PELEHRVSLF (98 aa)). Residues 382–397 (SRSSVTRAQSDSSQTL) show a composition bias toward low complexity. Residues 398-411 (GSSMDCSTAREEPS) show a composition bias toward polar residues. The span at 421–430 (LPSQQQVEEA) shows a compositional bias: pro residues.

In terms of assembly, homodimer; disulfide-linked. In terms of tissue distribution, mainly expressed in the cerebellum. Also expressed in cerebral cortex, skeletal muscle and thyroid, but at much lower levels.

It localises to the cell membrane. Its subcellular location is the cell projection. The protein resides in the dendrite. The protein localises to the perikaryon. Functionally, voltage-sensor protein present on the post-synaptic side of glutamatergic mossy fibers and granule cells in the cerebellum. Despite the presence of a voltage-sensor segment, does not form a functional ion channel and its precise role remains unclear. Undergoes both rapid and slow structural rearrangements in response to changes in voltage. Contains a zinc-binding site that can regulate the slow conformational transition. The polypeptide is Transmembrane protein 266 (Homo sapiens (Human)).